A 905-amino-acid chain; its full sequence is DNA gyrase subunit A (905 aa).

The region spanning 35–524 (IPDVRDGLKP…GEFDQDIEDL (490 aa)) is the Topo IIA-type catalytic domain. Tyrosine 123 serves as the catalytic O-(5'-phospho-DNA)-tyrosine intermediate. Residues 551–557 (QKRGGKG) carry the GyrA-box motif.

This sequence belongs to the type II topoisomerase GyrA/ParC subunit family. As to quaternary structure, heterotetramer, composed of two GyrA and two GyrB chains. In the heterotetramer, GyrA contains the active site tyrosine that forms a transient covalent intermediate with DNA, while GyrB binds cofactors and catalyzes ATP hydrolysis.

It localises to the cytoplasm. The enzyme catalyses ATP-dependent breakage, passage and rejoining of double-stranded DNA.. In terms of biological role, a type II topoisomerase that negatively supercoils closed circular double-stranded (ds) DNA in an ATP-dependent manner to modulate DNA topology and maintain chromosomes in an underwound state. Negative supercoiling favors strand separation, and DNA replication, transcription, recombination and repair, all of which involve strand separation. Also able to catalyze the interconversion of other topological isomers of dsDNA rings, including catenanes and knotted rings. Type II topoisomerases break and join 2 DNA strands simultaneously in an ATP-dependent manner. The chain is DNA gyrase subunit A from Rickettsia typhi (strain ATCC VR-144 / Wilmington).